We begin with the raw amino-acid sequence, 99 residues long: Aspartyl/glutamyl-tRNA(Asn/Gln) amidotransferase subunit C (99 aa).

It belongs to the GatC family. In terms of assembly, heterotrimer of A, B and C subunits.

It carries out the reaction L-glutamyl-tRNA(Gln) + L-glutamine + ATP + H2O = L-glutaminyl-tRNA(Gln) + L-glutamate + ADP + phosphate + H(+). It catalyses the reaction L-aspartyl-tRNA(Asn) + L-glutamine + ATP + H2O = L-asparaginyl-tRNA(Asn) + L-glutamate + ADP + phosphate + 2 H(+). In terms of biological role, allows the formation of correctly charged Asn-tRNA(Asn) or Gln-tRNA(Gln) through the transamidation of misacylated Asp-tRNA(Asn) or Glu-tRNA(Gln) in organisms which lack either or both of asparaginyl-tRNA or glutaminyl-tRNA synthetases. The reaction takes place in the presence of glutamine and ATP through an activated phospho-Asp-tRNA(Asn) or phospho-Glu-tRNA(Gln). In Methylibium petroleiphilum (strain ATCC BAA-1232 / LMG 22953 / PM1), this protein is Aspartyl/glutamyl-tRNA(Asn/Gln) amidotransferase subunit C.